Consider the following 279-residue polypeptide: Elongation factor Ts (279 aa).

The interval 80-83 (TDFV) is involved in Mg(2+) ion dislocation from EF-Tu.

The protein belongs to the EF-Ts family.

Its subcellular location is the cytoplasm. Associates with the EF-Tu.GDP complex and induces the exchange of GDP to GTP. It remains bound to the aminoacyl-tRNA.EF-Tu.GTP complex up to the GTP hydrolysis stage on the ribosome. The chain is Elongation factor Ts (tsf) from Borreliella burgdorferi (strain ATCC 35210 / DSM 4680 / CIP 102532 / B31) (Borrelia burgdorferi).